Consider the following 369-residue polypeptide: Cobalt-precorrin-5B C(1)-methyltransferase (369 aa).

It belongs to the CbiD family.

It carries out the reaction Co-precorrin-5B + S-adenosyl-L-methionine = Co-precorrin-6A + S-adenosyl-L-homocysteine. Its pathway is cofactor biosynthesis; adenosylcobalamin biosynthesis; cob(II)yrinate a,c-diamide from sirohydrochlorin (anaerobic route): step 6/10. Catalyzes the methylation of C-1 in cobalt-precorrin-5B to form cobalt-precorrin-6A. This is Cobalt-precorrin-5B C(1)-methyltransferase from Brucella melitensis biotype 1 (strain ATCC 23456 / CCUG 17765 / NCTC 10094 / 16M).